Here is a 743-residue protein sequence, read N- to C-terminus: Phosphoribosylformylglycinamidine synthase subunit PurL (743 aa).

The active site involves H50. ATP is bound by residues Y53 and K92. E94 contributes to the Mg(2+) binding site. Residues 95–98 (SHNH) and R117 contribute to the substrate site. The active-site Proton acceptor is the H96. Position 118 (D118) interacts with Mg(2+). Residue Q241 participates in substrate binding. D269 provides a ligand contact to Mg(2+). 313 to 315 (ESQ) lines the substrate pocket. The ATP site is built by D494 and G531. Residue N532 coordinates Mg(2+). S534 serves as a coordination point for substrate.

The protein belongs to the FGAMS family. As to quaternary structure, monomer. Part of the FGAM synthase complex composed of 1 PurL, 1 PurQ and 2 PurS subunits.

The protein resides in the cytoplasm. The catalysed reaction is N(2)-formyl-N(1)-(5-phospho-beta-D-ribosyl)glycinamide + L-glutamine + ATP + H2O = 2-formamido-N(1)-(5-O-phospho-beta-D-ribosyl)acetamidine + L-glutamate + ADP + phosphate + H(+). Its pathway is purine metabolism; IMP biosynthesis via de novo pathway; 5-amino-1-(5-phospho-D-ribosyl)imidazole from N(2)-formyl-N(1)-(5-phospho-D-ribosyl)glycinamide: step 1/2. Functionally, part of the phosphoribosylformylglycinamidine synthase complex involved in the purines biosynthetic pathway. Catalyzes the ATP-dependent conversion of formylglycinamide ribonucleotide (FGAR) and glutamine to yield formylglycinamidine ribonucleotide (FGAM) and glutamate. The FGAM synthase complex is composed of three subunits. PurQ produces an ammonia molecule by converting glutamine to glutamate. PurL transfers the ammonia molecule to FGAR to form FGAM in an ATP-dependent manner. PurS interacts with PurQ and PurL and is thought to assist in the transfer of the ammonia molecule from PurQ to PurL. The sequence is that of Phosphoribosylformylglycinamidine synthase subunit PurL from Mesorhizobium japonicum (strain LMG 29417 / CECT 9101 / MAFF 303099) (Mesorhizobium loti (strain MAFF 303099)).